The primary structure comprises 86 residues: MANIKSAKKRAITSEKRRQHNASRRSMMRTFFKKVIAAIEAGEKENATKAFADMQPVLDRMATKGLIHKNKAARQKARLTAKIKAL.

The disordered stretch occupies residues 1 to 26 (MANIKSAKKRAITSEKRRQHNASRRS).

Belongs to the bacterial ribosomal protein bS20 family.

In terms of biological role, binds directly to 16S ribosomal RNA. This chain is Small ribosomal subunit protein bS20, found in Photobacterium profundum (strain SS9).